The sequence spans 581 residues: Putative protein phosphatase 2C 22 (581 aa).

The signal sequence occupies residues 1 to 21 (MVISVPLFSSVLLALVVAVPA). In terms of domain architecture, PPM-type phosphatase spans 102 to 478 (KYASSAMQGL…NNATAILVQF (377 aa)). The Mn(2+) site is built by D138, G139, D373, and N469. The disordered stretch occupies residues 538-563 (SDEVAGGAAVAEQHQHNPEGGGEQQL).

This sequence belongs to the PP2C family. It depends on Mg(2+) as a cofactor. Mn(2+) serves as cofactor.

It catalyses the reaction O-phospho-L-seryl-[protein] + H2O = L-seryl-[protein] + phosphate. The catalysed reaction is O-phospho-L-threonyl-[protein] + H2O = L-threonyl-[protein] + phosphate. The chain is Putative protein phosphatase 2C 22 from Oryza sativa subsp. japonica (Rice).